Consider the following 151-residue polypeptide: Superoxide dismutase [Cu-Zn] 2 (151 aa).

Residues His-44, His-46, and His-61 each coordinate Cu cation. Residues Cys-55 and Cys-144 are joined by a disulfide bond. Zn(2+) is bound by residues His-61, His-69, His-78, and Asp-81. Position 118 (His-118) interacts with Cu cation.

This sequence belongs to the Cu-Zn superoxide dismutase family. As to quaternary structure, homodimer. Requires Cu cation as cofactor. The cofactor is Zn(2+).

The protein localises to the cytoplasm. It carries out the reaction 2 superoxide + 2 H(+) = H2O2 + O2. In terms of biological role, destroys radicals which are normally produced within the cells and which are toxic to biological systems. In Zea mays (Maize), this protein is Superoxide dismutase [Cu-Zn] 2 (SODCC.1).